A 274-amino-acid chain; its full sequence is Elongation factor Ts (274 aa).

Residues 79 to 82 (TDFV) are involved in Mg(2+) ion dislocation from EF-Tu.

Belongs to the EF-Ts family.

The protein localises to the cytoplasm. Its function is as follows. Associates with the EF-Tu.GDP complex and induces the exchange of GDP to GTP. It remains bound to the aminoacyl-tRNA.EF-Tu.GTP complex up to the GTP hydrolysis stage on the ribosome. The polypeptide is Elongation factor Ts (Aster yellows witches'-broom phytoplasma (strain AYWB)).